The following is a 489-amino-acid chain: Diacylglycerol O-acyltransferase 1 (489 aa).

The tract at residues 1 to 54 is disordered; sequence MGDRGGAGGSRRRRTGSRPSIQGGSGPAAAEEEVRDVGAGGDAPVRDTDKDGDV. Residues 1–80 are Cytoplasmic-facing; sequence MGDRGGAGGS…SLFSSDSGFS (80 aa). Positions 1–88 are involved in homomerization; sequence MGDRGGAGGS…FSNYRGILNW (88 aa). S20 bears the Phosphoserine mark. Basic and acidic residues predominate over residues 44–53; it reads PVRDTDKDGD. Residues 81 to 115 form a helical membrane-spanning segment; it reads NYRGILNWCVVMLILSNARLFLENLIKYGILVDPI. At 116–127 the chain is on the lumenal side; that stretch reads QVVSLFLKDPYS. The segment at 116–127 is extracellular loop 1 (EL1); sequence QVVSLFLKDPYS. A helical transmembrane segment spans residues 128 to 153; the sequence is WPALCLVIVANIFAVAAFQVEKRLAV. Residues 128–489 form an MBOAT fold region; the sequence is WPALCLVIVA…LNREAPAAGT (362 aa). Topologically, residues 154-158 are cytoplasmic; that stretch reads GALTE. Residues 159 to 181 traverse the membrane as a helical segment; the sequence is QAGLLLHGVNLATILCFPAAVAF. Residues 182–188 lie on the Lumenal side of the membrane; it reads LLESITP. The helical transmembrane segment at 189–220 threads the bilayer; sequence VGSVLALMVYTILFLKLFSYRDVNLWCRERRA. Over 221–274 the chain is Cytoplasmic; that stretch reads GAKAKAALAGKKANGGAAQRTVSYPDNLTYRDLYYFLFAPTLCYELNFPRSPRI. The segment at 225 to 277 is intracellular loop 1 (IL1); it reads KAALAGKKANGGAAQRTVSYPDNLTYRDLYYFLFAPTLCYELNFPRSPRIRKR. The chain crosses the membrane as a helical span at residues 275 to 309; sequence RKRFLLRRLLEMLFLTQLQVGLIQQWMVPAIQNSM. Residues 310–316 are Lumenal-facing; it reads KPFKDMD. Residues 317–354 form a helical membrane-spanning segment; sequence YSRIVERLLKLAVPNHLIWLIFFYWLFHSCLNAVAELM. Residues 355 to 400 lie on the Cytoplasmic side of the membrane; sequence QFGDREFYRDWWNSESITYFWQNWNIPVHKWCIRHFYKPMLRRGSS. An intracellular loop 2 (IL2) region spans residues 355–400; that stretch reads QFGDREFYRDWWNSESITYFWQNWNIPVHKWCIRHFYKPMLRRGSS. The FYXDWWN motif signature appears at 361-367; the sequence is FYRDWWN. An acyl-CoA contacts are provided by residues 375–383, Y391, and R405; that span reads WQNWNIPVH. Residues 381 to 395 form an amphipathic helix (AH) region; that stretch reads PVHKWCIRHFYKPML. A helical transmembrane segment spans residues 401-421; the sequence is KWAARTAVFLASAFFHEYLVS. H416 is a catalytic residue. The Lumenal segment spans residues 422-429; the sequence is IPLRMFRL. A helical transmembrane segment spans residues 430–448; it reads WAFTGMMAQIPLAWIVGRF. Topologically, residues 449–450 are cytoplasmic; that stretch reads FR. The helical transmembrane segment at 451 to 482 threads the bilayer; that stretch reads GNYGNAAVWLSLIIGQPVAVLMYVHDYYVLNR. Y478 contacts an acyl-CoA. Topologically, residues 483 to 489 are lumenal; sequence EAPAAGT.

It belongs to the membrane-bound acyltransferase family. Sterol o-acyltransferase subfamily. As to quaternary structure, homodimer or homotetramer; both forms have similar enzymatic activities.

The protein resides in the endoplasmic reticulum membrane. It catalyses the reaction an acyl-CoA + a 1,2-diacyl-sn-glycerol = a triacyl-sn-glycerol + CoA. The enzyme catalyses all-trans-retinol + an acyl-CoA = an all-trans-retinyl ester + CoA. The catalysed reaction is 2-(9Z-octadecenoyl)-glycerol + (9Z)-octadecenoyl-CoA = 1,2-di-(9Z-octadecenoyl)-sn-glycerol + CoA. It carries out the reaction 1,2-di-(9Z-octadecenoyl)-sn-glycerol + (9Z)-octadecenoyl-CoA = 1,2,3-tri-(9Z-octadecenoyl)-glycerol + CoA. It catalyses the reaction all-trans-retinol + hexadecanoyl-CoA = all-trans-retinyl hexadecanoate + CoA. The enzyme catalyses 1-O-(9Z-octadecenyl)-glycerol + (9Z)-octadecenoyl-CoA = 1-O-(9Z-octadecyl)-3-(9Z-octadecenoyl)-glycerol + CoA. The catalysed reaction is 1-O-(9Z-octadecyl)-3-(9Z-octadecenoyl)-glycerol + (9Z)-octadecenoyl-CoA = 1-O-(9Z-octadecenyl)-2,3-di-(9Z-octadecenoyl)glycerol + CoA. It carries out the reaction 1-(9Z-octadecenoyl)-glycerol + (9Z)-octadecenoyl-CoA = 1,2-di-(9Z-octadecenoyl)-glycerol + CoA. It catalyses the reaction 1,2-di-(9Z-octadecenoyl)-glycerol + (9Z)-octadecenoate + H(+) = 1,2,3-tri-(9Z-octadecenoyl)-glycerol + H2O. The enzyme catalyses 1-octadecanoyl-2-(5Z,8Z,11Z,14Z-eicosatetraenoyl)-sn-glycerol + (9Z)-octadecenoyl-CoA = 1-octadecanoyl-2-(5Z,8Z,11Z,14Z)-eicosatetraenoyl-3-(9Z)-octadecenoyl-sn-glycerol + CoA. The catalysed reaction is hexadecane-1,2-diol + 2 hexadecanoyl-CoA = 1,2-O,O-dihexadecanoyl-1,2-hexadecanediol + 2 CoA. It carries out the reaction hexadecane-1,2-diol + hexadecanoyl-CoA = 2-hydroxyhexadecyl hexadecanoate + CoA. It catalyses the reaction 2-(9Z-octadecenoyl)-glycerol + hexadecanoyl-CoA = 1-hexadecanoyl-2-(9Z-octadecenoyl)-sn-glycerol + CoA. The enzyme catalyses 1,2-di-(9Z-octadecenoyl)-sn-glycerol + hexadecanoyl-CoA = 1,2-di-(9Z)-octadecenoyl-3-hexadecanoyl-sn-glycerol + CoA. The catalysed reaction is hexadecan-1-ol + hexadecanoyl-CoA = hexadecanyl hexadecanoate + CoA. It carries out the reaction 13-cis-retinol + hexadecanoyl-CoA = 13-cis-retinyl hexadecanoate + CoA. It catalyses the reaction 1,3-di-(9Z-octadecenoyl)-glycerol + (9Z)-octadecenoyl-CoA = 1,2,3-tri-(9Z-octadecenoyl)-glycerol + CoA. The enzyme catalyses 2,3-di-(9Z)-octadecenoyl-sn-glycerol + (9Z)-octadecenoyl-CoA = 1,2,3-tri-(9Z-octadecenoyl)-glycerol + CoA. The protein operates within lipid metabolism; glycerolipid metabolism. Functionally, catalyzes the terminal and only committed step in triacylglycerol synthesis by using diacylglycerol and fatty acyl CoA as substrates. Highly expressed in epithelial cells of the small intestine and its activity is essential for the absorption of dietary fats. In liver, plays a role in esterifying exogenous fatty acids to glycerol, and is required to synthesize fat for storage. Also present in female mammary glands, where it produces fat in the milk. May be involved in VLDL (very low density lipoprotein) assembly. In contrast to DGAT2 it is not essential for survival. Functions as the major acyl-CoA retinol acyltransferase (ARAT) in the skin, where it acts to maintain retinoid homeostasis and prevent retinoid toxicity leading to skin and hair disorders. Exhibits additional acyltransferase activities, includin acyl CoA:monoacylglycerol acyltransferase (MGAT), wax monoester and wax diester synthases. Also able to use 1-monoalkylglycerol (1-MAkG) as an acyl acceptor for the synthesis of monoalkyl-monoacylglycerol (MAMAG). This Bos taurus (Bovine) protein is Diacylglycerol O-acyltransferase 1 (DGAT1).